We begin with the raw amino-acid sequence, 317 residues long: Methionyl-tRNA formyltransferase (317 aa).

(6S)-5,6,7,8-tetrahydrofolate is bound at residue 112 to 115 (SLLP).

It belongs to the Fmt family.

It carries out the reaction L-methionyl-tRNA(fMet) + (6R)-10-formyltetrahydrofolate = N-formyl-L-methionyl-tRNA(fMet) + (6S)-5,6,7,8-tetrahydrofolate + H(+). Functionally, attaches a formyl group to the free amino group of methionyl-tRNA(fMet). The formyl group appears to play a dual role in the initiator identity of N-formylmethionyl-tRNA by promoting its recognition by IF2 and preventing the misappropriation of this tRNA by the elongation apparatus. This chain is Methionyl-tRNA formyltransferase, found in Histophilus somni (strain 2336) (Haemophilus somnus).